We begin with the raw amino-acid sequence, 714 residues long: Elongation factor G-like protein (714 aa).

One can recognise a tr-type G domain in the interval Gly-21 to Met-289. Residues Gly-30–Thr-37 form a G1 region. Gly-30–Thr-37 is a binding site for GTP. The G2 stretch occupies residues Gln-73–Gly-77. The interval Asp-94 to Gly-97 is G3. GTP is bound by residues Asp-94–Tyr-98 and Thr-148–Asp-151. A G4 region spans residues Thr-148–Asp-151. Residues Cys-267–Ser-269 form a G5 region.

This sequence belongs to the TRAFAC class translation factor GTPase superfamily. Classic translation factor GTPase family. EF-G/EF-2 subfamily.

The chain is Elongation factor G-like protein from Mycobacterium tuberculosis (strain CDC 1551 / Oshkosh).